The primary structure comprises 284 residues: Pseudouridine-5'-phosphate glycosidase (284 aa).

E17 acts as the Proton donor in catalysis. Substrate-binding residues include K77 and V97. Residue D126 coordinates Mn(2+). 128-130 lines the substrate pocket; that stretch reads SQD. K147 acts as the Nucleophile in catalysis.

The protein belongs to the pseudouridine-5'-phosphate glycosidase family. Homotrimer. Requires Mn(2+) as cofactor.

The enzyme catalyses D-ribose 5-phosphate + uracil = psi-UMP + H2O. Catalyzes the reversible cleavage of pseudouridine 5'-phosphate (PsiMP) to ribose 5-phosphate and uracil. Functions biologically in the cleavage direction, as part of a pseudouridine degradation pathway. In Thermotoga neapolitana (strain ATCC 49049 / DSM 4359 / NBRC 107923 / NS-E), this protein is Pseudouridine-5'-phosphate glycosidase.